A 990-amino-acid chain; its full sequence is Kinesin-related protein 5 (990 aa).

The Kinesin motor domain occupies 6-330 (NIRVMCRFRP…LKFGARAKSI (325 aa)). 83–90 (GQTGSGKT) is a binding site for ATP. Disordered stretches follow at residues 401–485 (QSNS…SSID) and 732–788 (FSSS…QDQQ). Residues 406 to 418 (SGGGGSGSSGGSS) are compositionally biased toward gly residues. Composition is skewed to low complexity over residues 466–485 (TSSISSSSISSMSSLSSSID) and 733–781 (SSSN…PSSN). A coiled-coil region spans residues 513-948 (IEMEKMKEDT…DQLISTQRLI (436 aa)).

It belongs to the TRAFAC class myosin-kinesin ATPase superfamily. Kinesin family. Kinesin subfamily. As to quaternary structure, interacts with actin.

The protein localises to the cytoplasm. The protein resides in the cytoskeleton. Microtubule-associated force-producing protein that plays a role in organelle transport. Its motor activity is directed toward the microtubule's plus end. May connect microtubules to actin filaments. Associates with actin-based structures in cells and is likely involved in the organization of actin cytoskeletons in such structures. This chain is Kinesin-related protein 5 (kif5), found in Dictyostelium discoideum (Social amoeba).